A 73-amino-acid polypeptide reads, in one-letter code: UPF0235 protein LBL_1291 (73 aa).

Belongs to the UPF0235 family.

The polypeptide is UPF0235 protein LBL_1291 (Leptospira borgpetersenii serovar Hardjo-bovis (strain L550)).